A 270-amino-acid chain; its full sequence is Formamidopyrimidine-DNA glycosylase (270 aa).

Pro2 functions as the Schiff-base intermediate with DNA in the catalytic mechanism. Glu3 (proton donor) is an active-site residue. The active-site Proton donor; for beta-elimination activity is the Lys58. DNA-binding residues include His92, Arg111, and Arg153. The segment at 238–270 (SVYGASVCPVCGGALRQIRLAQRGTWFCPRCQR) adopts an FPG-type zinc-finger fold. The active-site Proton donor; for delta-elimination activity is the Arg260.

It belongs to the FPG family. As to quaternary structure, monomer. Requires Zn(2+) as cofactor.

It carries out the reaction Hydrolysis of DNA containing ring-opened 7-methylguanine residues, releasing 2,6-diamino-4-hydroxy-5-(N-methyl)formamidopyrimidine.. The enzyme catalyses 2'-deoxyribonucleotide-(2'-deoxyribose 5'-phosphate)-2'-deoxyribonucleotide-DNA = a 3'-end 2'-deoxyribonucleotide-(2,3-dehydro-2,3-deoxyribose 5'-phosphate)-DNA + a 5'-end 5'-phospho-2'-deoxyribonucleoside-DNA + H(+). Its function is as follows. Involved in base excision repair of DNA damaged by oxidation or by mutagenic agents. Acts as a DNA glycosylase that recognizes and removes damaged bases. Has a preference for oxidized purines, such as 7,8-dihydro-8-oxoguanine (8-oxoG). Has AP (apurinic/apyrimidinic) lyase activity and introduces nicks in the DNA strand. Cleaves the DNA backbone by beta-delta elimination to generate a single-strand break at the site of the removed base with both 3'- and 5'-phosphates. This chain is Formamidopyrimidine-DNA glycosylase, found in Halorhodospira halophila (strain DSM 244 / SL1) (Ectothiorhodospira halophila (strain DSM 244 / SL1)).